We begin with the raw amino-acid sequence, 1381 residues long: Major capsid protein (1381 aa).

Belongs to the herpesviridae major capsid protein family. As to quaternary structure, homomultimer. Makes the hexons and eleven out of twelve pentons. Interacts with triplex proteins 1/TRX1 and 2/TRX2; adjacent capsomers are linked together in groups of three by triplexes, heterotrimeric complexes composed of one molecule of TRX1 and two molecules of TRX2. Interacts with scaffold protein; this interaction allows efficient MCP transport to the host nucleus. Interacts with capsid vertex component 2/CVC2. Interacts with the small capsomere-interacting protein/SCP.

The protein localises to the virion. The protein resides in the host nucleus. Its function is as follows. Self-assembles to form an icosahedral capsid with a T=16 symmetry, about 200 nm in diameter, and consisting of 150 hexons and 12 pentons (total of 162 capsomers). Hexons form the edges and faces of the capsid and are each composed of six MCP molecules. In contrast, one penton is found at each of the 12 vertices. Eleven of the pentons are MCP pentamers, while the last vertex is occupied by the portal complex. The capsid is surrounded by a layer of proteinaceous material designated the tegument which, in turn, is enclosed in an envelope of host cell-derived lipids containing virus-encoded glycoproteins. The polypeptide is Major capsid protein (Epstein-Barr virus (strain B95-8) (HHV-4)).